The primary structure comprises 409 residues: MDKLLERFLHYVSLDTQSKSGVRQVPSTEGQWKLLRLLKQQLEEMGLVNITLSEKGTLMATLPANVEGDIPAIGFISHVDTSPDFSGKNVNPQIVENYRGGDIALGIGDEVLSPVMFPVLHQLLGQTLITTDGKTLLGADDKAGVAEIMTALAVLKGNPIPHGEIKVAFTPDEEVGKGAKHFDVEAFGAQWAYTVDGGGVGELEFENFNAASVNIKIVGNNVHPGTAKGVMVNALSLAARIHAEVPADETPETTEGYEGFYHLASMKGTVDRAEMHYIIRDFDRKQFEARKRKMMEIAKKVGKGLHPDCYIELVIEDSYYNMREKVVEHPHILDIAQQAMRDCHITPEMKPIRGGTDGAQLSFMGLPCPNLFTGGYNYHGKHEFVTLEGMEKAVQVIVRIAELTAKRGQ.

A Zn(2+)-binding site is contributed by His-78. The active site involves Asp-80. Asp-140 is a Zn(2+) binding site. The active-site Proton acceptor is the Glu-173. 3 residues coordinate Zn(2+): Glu-174, Asp-196, and His-379.

This sequence belongs to the peptidase M20B family. Requires Zn(2+) as cofactor.

Its subcellular location is the cytoplasm. It carries out the reaction Release of the N-terminal residue from a tripeptide.. In terms of biological role, cleaves the N-terminal amino acid of tripeptides. The chain is Peptidase T from Salmonella enteritidis PT4 (strain P125109).